We begin with the raw amino-acid sequence, 205 residues long: Large ribosomal subunit protein uL4 (205 aa).

The disordered stretch occupies residues 44 to 79 (RAGTKAQKTRREVSGSGAKPWRQKGTGRARAGSSRS).

This sequence belongs to the universal ribosomal protein uL4 family. As to quaternary structure, part of the 50S ribosomal subunit.

In terms of biological role, one of the primary rRNA binding proteins, this protein initially binds near the 5'-end of the 23S rRNA. It is important during the early stages of 50S assembly. It makes multiple contacts with different domains of the 23S rRNA in the assembled 50S subunit and ribosome. Its function is as follows. Forms part of the polypeptide exit tunnel. The polypeptide is Large ribosomal subunit protein uL4 (Coxiella burnetii (strain Dugway 5J108-111)).